The sequence spans 265 residues: Tryptophan synthase alpha chain (265 aa).

Active-site proton acceptor residues include E49 and D60.

The protein belongs to the TrpA family. Tetramer of two alpha and two beta chains.

The enzyme catalyses (1S,2R)-1-C-(indol-3-yl)glycerol 3-phosphate + L-serine = D-glyceraldehyde 3-phosphate + L-tryptophan + H2O. It functions in the pathway amino-acid biosynthesis; L-tryptophan biosynthesis; L-tryptophan from chorismate: step 5/5. The alpha subunit is responsible for the aldol cleavage of indoleglycerol phosphate to indole and glyceraldehyde 3-phosphate. The chain is Tryptophan synthase alpha chain from Polynucleobacter necessarius subsp. necessarius (strain STIR1).